Here is a 579-residue protein sequence, read N- to C-terminus: Basic helix-loop-helix ARNT-like protein 2 (579 aa).

The interaction with PER2 stretch occupies residues 1-198 (MEFPRKRRGR…SPREKPIDTK (198 aa)). The Nuclear localization signal motif lies at 4 to 9 (PRKRRG). Residues 40 to 61 (RTGVSAPSGIREAHSQMEKRRR) are disordered. One can recognise a bHLH domain in the interval 48 to 101 (GIREAHSQMEKRRRDKMNHLIQKLSSMIPPHIPTAHKLDKLSVLRRAVQYLRSL). The span at 50 to 59 (REAHSQMEKR) shows a compositional bias: basic and acidic residues. Positions 118–128 (IQDKELSHLIL) match the Nuclear export signal 1 motif. Residues 119–190 (QDKELSHLIL…KEQLSCDGSP (72 aa)) enclose the PAS 1 domain. Basic and acidic residues predominate over residues 186–196 (CDGSPREKPID). Positions 186 to 213 (CDGSPREKPIDTKTSQVYSHPYTGRPRM) are disordered. Lysine 226 participates in a covalent cross-link: Glycyl lysine isopeptide (Lys-Gly) (interchain with G-Cter in SUMO2 and SUMO3). Lysine 233 participates in a covalent cross-link: Glycyl lysine isopeptide (Lys-Gly) (interchain with G-Cter in SUMO2). Residues 296–366 (VPQKSGKINV…DKHKAVLQSK (71 aa)) form the PAS 2 domain. A Nuclear export signal 2 motif is present at residues 331 to 339 (LGYLPQELL). Positions 371–414 (TDSYKFRVKDGAFVTLKSEWFSFTNPWTKELEYIVSVNTLVLGR) constitute a PAC domain. A disordered region spans residues 469 to 536 (RLHSSSPEDA…AHPHGPLPGD (68 aa)).

Component of the circadian core oscillator, which includes the CRY proteins, CLOCK, or NPAS2, BMAL1 or BMAL2, CSNK1D and/or CSNK1E, TIMELESS and the PER proteins. Interacts directly with CLOCK to form the BMAL2-CLOCK transactivator. Can form heterodimers or homodimers which interact directly with CLOCK to form the transcription activator. Interacts with NPAS2 and HIF1A. Interacts with PER2. As to expression, expressed in the suprachiasmatic nucleus (SCN).

The protein resides in the nucleus. Transcriptional activator which forms a core component of the circadian clock. The circadian clock, an internal time-keeping system, regulates various physiological processes through the generation of approximately 24 hour circadian rhythms in gene expression, which are translated into rhythms in metabolism and behavior. It is derived from the Latin roots 'circa' (about) and 'diem' (day) and acts as an important regulator of a wide array of physiological functions including metabolism, sleep, body temperature, blood pressure, endocrine, immune, cardiovascular, and renal function. Consists of two major components: the central clock, residing in the suprachiasmatic nucleus (SCN) of the brain, and the peripheral clocks that are present in nearly every tissue and organ system. Both the central and peripheral clocks can be reset by environmental cues, also known as Zeitgebers (German for 'timegivers'). The predominant Zeitgeber for the central clock is light, which is sensed by retina and signals directly to the SCN. The central clock entrains the peripheral clocks through neuronal and hormonal signals, body temperature and feeding-related cues, aligning all clocks with the external light/dark cycle. Circadian rhythms allow an organism to achieve temporal homeostasis with its environment at the molecular level by regulating gene expression to create a peak of protein expression once every 24 hours to control when a particular physiological process is most active with respect to the solar day. Transcription and translation of core clock components (CLOCK, NPAS2, BMAL1, BMAL2, PER1, PER2, PER3, CRY1 and CRY2) plays a critical role in rhythm generation, whereas delays imposed by post-translational modifications (PTMs) are important for determining the period (tau) of the rhythms (tau refers to the period of a rhythm and is the length, in time, of one complete cycle). A diurnal rhythm is synchronized with the day/night cycle, while the ultradian and infradian rhythms have a period shorter and longer than 24 hours, respectively. Disruptions in the circadian rhythms contribute to the pathology of cardiovascular diseases, cancer, metabolic syndromes and aging. A transcription/translation feedback loop (TTFL) forms the core of the molecular circadian clock mechanism. Transcription factors, CLOCK or NPAS2 and BMAL1 or BMAL2, form the positive limb of the feedback loop, act in the form of a heterodimer and activate the transcription of core clock genes and clock-controlled genes (involved in key metabolic processes), harboring E-box elements (5'-CACGTG-3') within their promoters. The core clock genes: PER1/2/3 and CRY1/2 which are transcriptional repressors form the negative limb of the feedback loop and interact with the CLOCK|NPAS2-BMAL1|BMAL2 heterodimer inhibiting its activity and thereby negatively regulating their own expression. This heterodimer also activates nuclear receptors NR1D1/2 and RORA/B/G, which form a second feedback loop and which activate and repress BMAL1 transcription, respectively. The CLOCK-BMAL2 heterodimer activates the transcription of SERPINE1/PAI1 and BHLHE40/DEC1. This chain is Basic helix-loop-helix ARNT-like protein 2 (Bmal2), found in Mus musculus (Mouse).